Reading from the N-terminus, the 117-residue chain is MAEVHNQLEIKFRLTDGSDIGPKAFPDATTVSALKETVISEWPREKENGPKTVKEVKLISAGKVLENSKTVKDYRSPVSNLAGAVTTMHVIIQAPVTEKEKKPKGDPKMNKCVCSVM.

In terms of domain architecture, Ubiquitin-like spans 8-74; the sequence is LEIKFRLTDG…LENSKTVKDY (67 aa). Residue cysteine 112 is the site of S-palmitoyl cysteine attachment. Residue cysteine 114 is modified to Cysteine methyl ester. Cysteine 114 carries the S-farnesyl cysteine lipid modification. Residues 115-117 constitute a propeptide, removed in mature form; that stretch reads SVM.

The protein localises to the cell membrane. Its function is as follows. May serve as docking site to facilitate the association of other proteins to the plasma membrane. The sequence is that of Membrane-anchored ubiquitin-fold protein 1 (MUB1) from Arabidopsis thaliana (Mouse-ear cress).